Consider the following 93-residue polypeptide: Small ribosomal subunit protein uS19 (93 aa).

A disordered region spans residues 73–93 (EFSPTRTFRGHVKDDRKSKRR). Over residues 83-93 (HVKDDRKSKRR) the composition is skewed to basic and acidic residues.

This sequence belongs to the universal ribosomal protein uS19 family.

Functionally, protein S19 forms a complex with S13 that binds strongly to the 16S ribosomal RNA. In Streptomyces avermitilis (strain ATCC 31267 / DSM 46492 / JCM 5070 / NBRC 14893 / NCIMB 12804 / NRRL 8165 / MA-4680), this protein is Small ribosomal subunit protein uS19.